Reading from the N-terminus, the 166-residue chain is NAD(P)H-quinone oxidoreductase subunit I, chloroplastic (166 aa).

2 4Fe-4S ferredoxin-type domains span residues 55-84 and 95-124; these read GRIH…VDWK and LNYS…MTEE. Positions 64, 67, 70, 74, 104, 107, 110, and 114 each coordinate [4Fe-4S] cluster.

The protein belongs to the complex I 23 kDa subunit family. In terms of assembly, NDH is composed of at least 16 different subunits, 5 of which are encoded in the nucleus. [4Fe-4S] cluster is required as a cofactor.

Its subcellular location is the plastid. It is found in the chloroplast thylakoid membrane. It carries out the reaction a plastoquinone + NADH + (n+1) H(+)(in) = a plastoquinol + NAD(+) + n H(+)(out). The enzyme catalyses a plastoquinone + NADPH + (n+1) H(+)(in) = a plastoquinol + NADP(+) + n H(+)(out). In terms of biological role, NDH shuttles electrons from NAD(P)H:plastoquinone, via FMN and iron-sulfur (Fe-S) centers, to quinones in the photosynthetic chain and possibly in a chloroplast respiratory chain. The immediate electron acceptor for the enzyme in this species is believed to be plastoquinone. Couples the redox reaction to proton translocation, and thus conserves the redox energy in a proton gradient. The polypeptide is NAD(P)H-quinone oxidoreductase subunit I, chloroplastic (Aphanactis jamesoniana).